A 156-amino-acid chain; its full sequence is Small ribosomal subunit protein uS7 (156 aa).

It belongs to the universal ribosomal protein uS7 family. In terms of assembly, part of the 30S ribosomal subunit. Contacts proteins S9 and S11.

One of the primary rRNA binding proteins, it binds directly to 16S rRNA where it nucleates assembly of the head domain of the 30S subunit. Is located at the subunit interface close to the decoding center, probably blocks exit of the E-site tRNA. In Desulfitobacterium hafniense (strain Y51), this protein is Small ribosomal subunit protein uS7.